Reading from the N-terminus, the 790-residue chain is Threonine--tRNA ligase 2, cytoplasmic (790 aa).

Residue Ala2 is modified to N-acetylalanine. Residues 13–68 adopt a coiled-coil conformation; that stretch reads SRLQRQEEDIRWLCAEVQRLRDEQLRGPERGQAEGPRLTREVAQLQAENRDLHQRL. The segment at 80–117 is disordered; sequence RTEAGRAAAHEPPTQNQEKDTKKKRLKQSEPGREVKQP. Residues 96–117 show a composition bias toward basic and acidic residues; it reads QEKDTKKKRLKQSEPGREVKQP. Residues 148–210 enclose the TGS domain; it reads NVISVRVAGG…EGDSTVELLM (63 aa). A Phosphoserine modification is found at Ser441. A Nuclear localization signal motif is present at residues 774–780; sequence KLKNLKK.

The protein belongs to the class-II aminoacyl-tRNA synthetase family. In terms of assembly, may be a component of the multisynthetase complex (MSC), a large multi-subunit complex which contains at least eight different aminoacyl-tRNA synthetases plus three auxillary subunits AIMP1, AIMP2 and EEF1E1. Interacts with the MSC components EPRS1, AIMP1, AIMP2 and KARS1. Ubiquitous (at protein level). Strongly expressed in muscle (at protein level). Moderately expressed in heart and liver (at protein level). Weakly expressed in stomach, kidney, testis, spleen, brain, fat and lung (at protein level).

Its subcellular location is the cytoplasm. The protein localises to the nucleus. The enzyme catalyses tRNA(Thr) + L-threonine + ATP = L-threonyl-tRNA(Thr) + AMP + diphosphate + H(+). Its function is as follows. Catalyzes the attachment of threonine to tRNA(Thr) in a two-step reaction: threonine is first activated by ATP to form Thr-AMP and then transferred to the acceptor end of tRNA(Thr). Also edits incorrectly charged tRNA(Thr) via its editing domain, at the post-transfer stage. This chain is Threonine--tRNA ligase 2, cytoplasmic (Tars3), found in Mus musculus (Mouse).